Here is a 189-residue protein sequence, read N- to C-terminus: Protein GrpE (189 aa).

Residues 1–24 (MADEQNLDTQNPEAQAAENAAPSD) are disordered. Residues 10-24 (QNPEAQAAENAAPSD) show a composition bias toward low complexity.

The protein belongs to the GrpE family. Homodimer.

It localises to the cytoplasm. Participates actively in the response to hyperosmotic and heat shock by preventing the aggregation of stress-denatured proteins, in association with DnaK and GrpE. It is the nucleotide exchange factor for DnaK and may function as a thermosensor. Unfolded proteins bind initially to DnaJ; upon interaction with the DnaJ-bound protein, DnaK hydrolyzes its bound ATP, resulting in the formation of a stable complex. GrpE releases ADP from DnaK; ATP binding to DnaK triggers the release of the substrate protein, thus completing the reaction cycle. Several rounds of ATP-dependent interactions between DnaJ, DnaK and GrpE are required for fully efficient folding. The chain is Protein GrpE from Ectopseudomonas mendocina (strain ymp) (Pseudomonas mendocina).